We begin with the raw amino-acid sequence, 503 residues long: MTITPVYTTFTPTKTPIKFFMAGLTFLIAHISHADDGRTDNQEPINQEIATLEPIINHAQPELLSHDALTPKIEPILAQTPNPAEDTLIADEALLLDNPDLLNHALNSAVMTNHMAGVHALLPIYQKLPKDHQNGILLGYANALAALDKGNAKKAIDELRRIIAIMPEYNVVRFHLARALFMDKQNEAALDQFNKLHADNLPEEVRQVVGQYRQALKQRDSWTWQVGMNLAKEDNINQTPKNTTQGQWTFDKPIDAITLSYQLGADKKWSLPKGAYVGANAQIYGKHHQNHKKYNDHWGRLGANLGFADAKKDLSIETYGEKRFYGHERYTDTIGIRMSVDYRINPKFQSLNAIDISRLTNHRTPRADSNNTLYSTSLIYYPNATRYYLLGADFYDEKVPQDPSDSYQRRGIRTAWGQEWAGGLSSRAQISINKRHYQGANLTSGGQIRHDKQMQASLSLWHRDIHKWGITPRLTISTNINKSNDIKANYHKNQMFVEFSRIF.

A signal peptide spans 1 to 34 (MTITPVYTTFTPTKTPIKFFMAGLTFLIAHISHA). The N-terminal domain stretch occupies residues 38 to 220 (RTDNQEPINQ…QYRQALKQRD (183 aa)). The TPR repeat unit spans residues 136-169 (ILLGYANALAALDKGNAKKAIDELRRIIAIMPEY). A C-terminal probable beta barrel region spans residues 221 to 503 (SWTWQVGMNL…QMFVEFSRIF (283 aa)). The next 14 beta stranded transmembrane spans lie at 222-232 (WTWQVGMNLAK), 259-270 (LSYQLGADKKWS), 275-285 (AYVGANAQIYG), 299-308 (GRLGANLGFA), 313-322 (DLSIETYGEK), 334-343 (IGIRMSVDYR), 348-358 (FQSLNAIDISR), 372-382 (TLYSTSLIYYP), 387-396 (YYLLGADFYD), 410-419 (RGIRTAWGQE), 424-434 (LSSRAQISINK), 454-463 (MQASLSLWHR), 470-479 (ITPRLTISTN), and 493-503 (NQMFVEFSRIF).

The protein belongs to the Slam family.

Its subcellular location is the cell outer membrane. Functionally, required for correct export to the cell surface of some cell outer membrane lipoproteins (tested with TpbP) upon heterologous expression in E.coli and probably also in Moraxella. This Moraxella catarrhalis (Branhamella catarrhalis) protein is Surface lipoprotein assembly modifier.